The primary structure comprises 272 residues: Protein FAM210A (272 aa).

The DUF1279 domain occupies 117 to 229 (DKSISLYQRF…GYMSTPPPVK (113 aa)). Residues 136–156 (VLIPVHLITSGVWFGTFYYAA) form a helical membrane-spanning segment. Residues 229-271 (KEYLQDRMEETKELITEKMEETKDRLTEKLQETKEKVSFKKKV) are a coiled coil. Residues 246–272 (KMEETKDRLTEKLQETKEKVSFKKKVE) form a disordered region.

It belongs to the FAM210 family. In terms of assembly, interacts with ATAD3A.

Its subcellular location is the membrane. It is found in the mitochondrion. It localises to the cytoplasm. Its function is as follows. May play a role in the structure and strength of both muscle and bone. This Pongo abelii (Sumatran orangutan) protein is Protein FAM210A (FAM210A).